The chain runs to 242 residues: Uridylate kinase (242 aa).

ATP is bound at residue 11–14 (KLSG). An involved in allosteric activation by GTP region spans residues 19–24 (GDKGVG). G53 provides a ligand contact to UMP. The ATP site is built by G54 and R58. Residues D73 and 134 to 141 (IGSPYFST) each bind UMP. Positions 162, 168, and 171 each coordinate ATP.

It belongs to the UMP kinase family. Homohexamer.

It is found in the cytoplasm. The enzyme catalyses UMP + ATP = UDP + ADP. It functions in the pathway pyrimidine metabolism; CTP biosynthesis via de novo pathway; UDP from UMP (UMPK route): step 1/1. Its activity is regulated as follows. Allosterically activated by GTP. Inhibited by UTP. Functionally, catalyzes the reversible phosphorylation of UMP to UDP. The chain is Uridylate kinase from Streptococcus agalactiae serotype III (strain NEM316).